The primary structure comprises 149 residues: Protein SprT-like (149 aa).

Residues 4-144 form the SprT-like domain; it reads TDYVKQVSLE…GLCRGKLLLV (141 aa). Histidine 64 contacts Zn(2+). Glutamate 65 is an active-site residue. Histidine 68 contributes to the Zn(2+) binding site.

This sequence belongs to the SprT family. Zn(2+) is required as a cofactor.

The protein resides in the cytoplasm. This is Protein SprT-like from Streptococcus pneumoniae serotype 4 (strain ATCC BAA-334 / TIGR4).